The primary structure comprises 163 residues: Large ribosomal subunit protein uL10 (163 aa).

This sequence belongs to the universal ribosomal protein uL10 family. As to quaternary structure, part of the ribosomal stalk of the 50S ribosomal subunit. The N-terminus interacts with L11 and the large rRNA to form the base of the stalk. The C-terminus forms an elongated spine to which L12 dimers bind in a sequential fashion forming a multimeric L10(L12)X complex.

Forms part of the ribosomal stalk, playing a central role in the interaction of the ribosome with GTP-bound translation factors. The polypeptide is Large ribosomal subunit protein uL10 (rplJ) (Pasteurella multocida (strain Pm70)).